Reading from the N-terminus, the 156-residue chain is Small ribosomal subunit protein uS7 (156 aa).

It belongs to the universal ribosomal protein uS7 family. Part of the 30S ribosomal subunit. Contacts proteins S9 and S11.

In terms of biological role, one of the primary rRNA binding proteins, it binds directly to 16S rRNA where it nucleates assembly of the head domain of the 30S subunit. Is located at the subunit interface close to the decoding center, probably blocks exit of the E-site tRNA. The chain is Small ribosomal subunit protein uS7 from Bartonella tribocorum (strain CIP 105476 / IBS 506).